A 319-amino-acid chain; its full sequence is tRNA-cytidine(32) 2-sulfurtransferase (319 aa).

The short motif at 49-54 is the PP-loop motif element; that stretch reads SGGKDS. The [4Fe-4S] cluster site is built by C124, C127, and C215.

This sequence belongs to the TtcA family. As to quaternary structure, homodimer. The cofactor is Mg(2+). It depends on [4Fe-4S] cluster as a cofactor.

It localises to the cytoplasm. It catalyses the reaction cytidine(32) in tRNA + S-sulfanyl-L-cysteinyl-[cysteine desulfurase] + AH2 + ATP = 2-thiocytidine(32) in tRNA + L-cysteinyl-[cysteine desulfurase] + A + AMP + diphosphate + H(+). It functions in the pathway tRNA modification. Its function is as follows. Catalyzes the ATP-dependent 2-thiolation of cytidine in position 32 of tRNA, to form 2-thiocytidine (s(2)C32). The sulfur atoms are provided by the cysteine/cysteine desulfurase (IscS) system. This is tRNA-cytidine(32) 2-sulfurtransferase from Shewanella amazonensis (strain ATCC BAA-1098 / SB2B).